Consider the following 214-residue polypeptide: Adenylate kinase (214 aa).

10–15 (GAGKGT) provides a ligand contact to ATP. The interval 30 to 59 (ATGDVLRAAVKEGTPLGLEAKAAMDRGDLV) is NMP. AMP is bound by residues T31, R36, 57-59 (DLV), and Q92. Positions 126 to 161 (GRTTCEACQRPFFGRQPGETCTEGGVSGTLVRRKDD) are LID. R127 lines the ATP pocket. Positions 158 and 169 each coordinate AMP. An ATP-binding site is contributed by G198.

The protein belongs to the adenylate kinase family. In terms of assembly, monomer.

It localises to the cytoplasm. It carries out the reaction AMP + ATP = 2 ADP. The protein operates within purine metabolism; AMP biosynthesis via salvage pathway; AMP from ADP: step 1/1. Its function is as follows. Catalyzes the reversible transfer of the terminal phosphate group between ATP and AMP. Plays an important role in cellular energy homeostasis and in adenine nucleotide metabolism. This Gemmatimonas aurantiaca (strain DSM 14586 / JCM 11422 / NBRC 100505 / T-27) protein is Adenylate kinase.